The chain runs to 522 residues: Nitrogen fixation protein VnfA (522 aa).

The segment at 22–183 (LLYEMSQIAT…AQAVELYLVE (162 aa)) is a domain. One can recognise a GAF domain in the interval 35 to 177 (DLSSIISILL…ILATTTAQAV (143 aa)). The Sigma-54 factor interaction domain occupies 210–439 (IIGNSKPMLE…LENVIERAML (230 aa)). Residues 238–245 (GESGVGKE) and 301–310 (AAGGTIFLDE) each bind ATP. Residues 493–512 (MTEAATHLGLTARVLGLRMG) constitute a DNA-binding region (H-T-H motif).

In terms of biological role, required for the expression of the V-dependent nitrogen fixation system in Azotobacter vinelandii. It is required for the regulation of nitrogenase 2 transcription. Interacts with sigma-54. The protein is Nitrogen fixation protein VnfA (vnfA) of Azotobacter vinelandii.